Reading from the N-terminus, the 186-residue chain is Putative 5'(3')-deoxyribonucleotidase (186 aa).

Aspartate 6 (nucleophile) is an active-site residue. Residues aspartate 6, aspartate 8, and aspartate 137 each contribute to the Mg(2+) site. Aspartate 8 serves as the catalytic Proton donor.

This sequence belongs to the 5'(3')-deoxyribonucleotidase family. It depends on Mg(2+) as a cofactor.

Its function is as follows. Dephosphorylates the 5' and 2'(3')-phosphates of deoxyribonucleotides. The polypeptide is Putative 5'(3')-deoxyribonucleotidase (Bordetella bronchiseptica (strain ATCC BAA-588 / NCTC 13252 / RB50) (Alcaligenes bronchisepticus)).